A 624-amino-acid polypeptide reads, in one-letter code: Plastin-2 (624 aa).

EF-hand domains follow at residues 9–44 and 49–84; these read EEME…ANLP and RVRE…LKSS. Positions 22, 24, 26, 28, 33, 62, 64, 66, 68, and 73 each coordinate Ca(2+). 4 consecutive Calponin-homology (CH) domains span residues 118 to 234, 262 to 373, 392 to 501, and 513 to 621; these read EEEK…KIGL, LSPE…NKYP, TREE…RRYT, and KIID…ARGM. Actin-binding regions lie at residues 118-373 and 392-621; these read EEEK…NKYP and TREE…ARGM.

As to quaternary structure, monomer. Expressed by macrophages (at protein level).

Its subcellular location is the cytoplasm. The protein localises to the cytoskeleton. The protein resides in the cell junction. It localises to the cell projection. It is found in the ruffle membrane. Functionally, actin-binding protein. Plays a role in the activation of T-cells. The protein is Plastin-2 of Danio rerio (Zebrafish).